The primary structure comprises 494 residues: PIGF/3-ketodihydrosphingosine reductase fusion protein (494 aa).

Positions 20, 22, and 24 each coordinate NADPH. Positions 20-24 (GGSQG) match the GXSXG motif. Leu25 is an NADP(+) binding site. NADPH-binding residues include Arg45 and Lys49. Val54 contributes to the NADP(+) binding site. 2 residues coordinate NADPH: Asp74 and Leu75. The helical transmembrane segment at 148 to 168 (ILLVGSLLSSLPIIGYSAYSP) threads the bilayer. Residues Tyr166, Lys170, and Ile199 each contribute to the NADP(+) site. Tyr166 (proton acceptor) is an active-site residue. Lys170 acts as the Lowers pKa of active site Tyr in catalysis. Transmembrane regions (helical) follow at residues 264–284 (HDNPILEYLFALVSLLAWPFY), 312–332 (IFTLLLTFTQLTIFYLSLNCL), 370–390 (LAGAASMLIGSLLISFILVAF), 402–422 (YFCALTLSVFTVYPLASTLAF), 444–464 (LRSWGPIIGAWFGAFPIPLDW), and 473–493 (ITIVIGAFLGYAFAAIVGEIL).

It in the N-terminal section; belongs to the short-chain dehydrogenases/reductases (SDR) family. In the C-terminal section; belongs to the PIGF family.

It localises to the endoplasmic reticulum membrane. The catalysed reaction is sphinganine + NADP(+) = 3-oxosphinganine + NADPH + H(+). The protein operates within glycolipid biosynthesis; glycosylphosphatidylinositol-anchor biosynthesis. It participates in lipid metabolism; sphingolipid metabolism. Acts in the GPI biosynthetic pathway between GlcNAc-PI synthesis and GPI transfer to protein. Required for the formation of complete GPI precursors CP1 and CP2. In terms of biological role, catalyzes the reduction of 3'-oxosphinganine (3-ketodihydrosphingosine/KDS) to sphinganine (dihydrosphingosine/DHS), the second step of de novo sphingolipid biosynthesis. The protein is PIGF/3-ketodihydrosphingosine reductase fusion protein of Schizosaccharomyces pombe (strain 972 / ATCC 24843) (Fission yeast).